The following is a 232-amino-acid chain: Ribose-5-phosphate isomerase A (232 aa).

Substrate-binding positions include 28-31 (TGST), 83-86 (DGAD), and 96-99 (KGGG). The active-site Proton acceptor is E105. K123 contacts substrate.

This sequence belongs to the ribose 5-phosphate isomerase family. In terms of assembly, homodimer.

It carries out the reaction aldehydo-D-ribose 5-phosphate = D-ribulose 5-phosphate. It functions in the pathway carbohydrate degradation; pentose phosphate pathway; D-ribose 5-phosphate from D-ribulose 5-phosphate (non-oxidative stage): step 1/1. Functionally, catalyzes the reversible conversion of ribose-5-phosphate to ribulose 5-phosphate. The polypeptide is Ribose-5-phosphate isomerase A (Rhodopseudomonas palustris (strain BisB5)).